Here is an 84-residue protein sequence, read N- to C-terminus: UPF0512 protein O (84 aa).

The protein belongs to the UPF0512 family.

The chain is UPF0512 protein O from Dictyostelium discoideum (Social amoeba).